Consider the following 184-residue polypeptide: Uroplakin-2 (184 aa).

A signal peptide spans Met-1–Ser-25. Positions Asp-26–Arg-84 are excised as a propeptide. N-linked (GlcNAc...) asparagine glycosylation is found at Asn-28, Asn-57, and Asn-66. Residues Glu-85 to Gly-155 are Lumenal-facing. Residues Met-156 to Leu-180 traverse the membrane as a helical segment. The Cytoplasmic portion of the chain corresponds to Gly-181 to Lys-184.

The protein belongs to the uroplakin-2 family. As to quaternary structure, interacts with uroplakin-1a (UPK1A). Expressed only in the urothelium. Localizes to urothelial superficial cells.

The protein resides in the cell membrane. Functionally, component of the asymmetric unit membrane (AUM); a highly specialized biomembrane elaborated by terminally differentiated urothelial cells. May play an important role in regulating the assembly of the AUM. This chain is Uroplakin-2 (UPK2), found in Sus scrofa (Pig).